The primary structure comprises 1390 residues: DNA-directed RNA polymerase subunit beta' (1390 aa).

Residues cysteine 73, cysteine 75, cysteine 88, and cysteine 91 each contribute to the Zn(2+) site. Mg(2+)-binding residues include aspartate 464, aspartate 466, and aspartate 468. Positions 810, 884, 891, and 894 each coordinate Zn(2+). Positions 1365-1390 are disordered; that stretch reads EKKEQKIYGNGEEPAKEQKWIPQAGT.

The protein belongs to the RNA polymerase beta' chain family. As to quaternary structure, the RNAP catalytic core consists of 2 alpha, 1 beta, 1 beta' and 1 omega subunit. When a sigma factor is associated with the core the holoenzyme is formed, which can initiate transcription. Mg(2+) is required as a cofactor. The cofactor is Zn(2+).

It carries out the reaction RNA(n) + a ribonucleoside 5'-triphosphate = RNA(n+1) + diphosphate. Functionally, DNA-dependent RNA polymerase catalyzes the transcription of DNA into RNA using the four ribonucleoside triphosphates as substrates. The protein is DNA-directed RNA polymerase subunit beta' of Methylacidiphilum infernorum (isolate V4) (Methylokorus infernorum (strain V4)).